The sequence spans 102 residues: Probable non-specific lipid-transfer protein (102 aa).

The signal sequence occupies residues 1–35; it reads MAMAMGMAMRKEAAVAVMMVMVVTLAAGADAGAGA. 4 disulfides stabilise this stretch: cysteine 37–cysteine 71, cysteine 45–cysteine 59, cysteine 60–cysteine 95, and cysteine 69–cysteine 102.

It belongs to the plant LTP family. B11E subfamily. As to expression, aleurone.

In terms of biological role, potential phospholipid transfer protein. In Hordeum vulgare (Barley), this protein is Probable non-specific lipid-transfer protein (LTP2).